Reading from the N-terminus, the 165-residue chain is Probable deoxyuridine 5'-triphosphate nucleotidohydrolase (165 aa).

Positions 39-49 (GRIDTDGKTIG) are enriched in basic and acidic residues. The interval 39 to 64 (GRIDTDGKTIGDRSPVTPTADEDSTD) is disordered.

This sequence belongs to the dCTP deaminase family. Archaeal dUTPase subfamily.

The enzyme catalyses dUTP + H2O = dUMP + diphosphate + H(+). The protein operates within pyrimidine metabolism; dUMP biosynthesis; dUMP from dCTP (dUTP route): step 2/2. This enzyme is involved in nucleotide metabolism: it produces dUMP, the immediate precursor of thymidine nucleotides and it decreases the intracellular concentration of dUTP so that uracil cannot be incorporated into DNA. In Halobacterium salinarum (strain ATCC 29341 / DSM 671 / R1), this protein is Probable deoxyuridine 5'-triphosphate nucleotidohydrolase.